The primary structure comprises 993 residues: UPF0182 protein MAV_4137 (993 aa).

The next 7 helical transmembrane spans lie at 18–38 (ILIL…RLID), 63–83 (FVVF…GLAV), 113–133 (LVSI…AQSY), 175–195 (FVAV…FGGI), 210–230 (IQLV…YWLD), 254–274 (AVLP…AAVF), and 287–307 (IGLV…PLIV). The tract at residues 903–941 (NIQPTEGGAPAASPPANAPAPAVTPGSAPPVAAPPVPDG) is disordered. The segment covering 929–939 (SAPPVAAPPVP) has biased composition (pro residues).

It belongs to the UPF0182 family.

The protein localises to the cell membrane. The polypeptide is UPF0182 protein MAV_4137 (Mycobacterium avium (strain 104)).